We begin with the raw amino-acid sequence, 305 residues long: MKILVIGGPTAIGKSDLACCVAQKLNGEIISADSMAVYKFMDIGTAKPLECMKKVPHHLIDVVEPGGYFDAKIFEEMAKEKIEEIKRKGKVPIVVGGTYLYIQALLYGIDETPKPDWNLRNKLYEIARKKGNDYLYEKLKAIDPKYAKKIHKNDLRRIVRALEVFINTGKPFSSFHSWNKPKMDFVGIYLKRSPESLYKRIENRVYDMVKDGLLEEVKKLLEMGYENFLTSGQAIDYKEFVPCAKGEKSLEECIKEAIKNTKKQAKRQIRWFRKQGWHEIDLDKLSIEEACEEVVRIYKDANKTK.

8–15 (GPTAIGKS) provides a ligand contact to ATP. Residue 10–15 (TAIGKS) coordinates substrate. Positions 33–36 (DSMA) are interaction with substrate tRNA.

This sequence belongs to the IPP transferase family. Monomer. Requires Mg(2+) as cofactor.

It carries out the reaction adenosine(37) in tRNA + dimethylallyl diphosphate = N(6)-dimethylallyladenosine(37) in tRNA + diphosphate. In terms of biological role, catalyzes the transfer of a dimethylallyl group onto the adenine at position 37 in tRNAs that read codons beginning with uridine, leading to the formation of N6-(dimethylallyl)adenosine (i(6)A). This chain is tRNA dimethylallyltransferase, found in Aquifex aeolicus (strain VF5).